The sequence spans 220 residues: Metalloproteinase inhibitor 2 (220 aa).

A signal peptide spans 1 to 26 (MPGAALPSLLAWLAVLLLGRARPADA). A Zn(2+)-binding site is contributed by C27. Involved in metalloproteinase-binding stretches follow at residues 27-30 (CSCS) and 95-96 (TE). 6 cysteine pairs are disulfide-bonded: C27-C98, C29-C127, C39-C152, C154-C201, C159-C164, and C172-C193. Residues 27-152 (CSCSPIHPQQ…SLNQRYQMGC (126 aa)) enclose the NTR domain.

The protein belongs to the protease inhibitor I35 (TIMP) family. Post-translationally, the activity of TIMP2 is dependent on the presence of disulfide bonds.

It is found in the secreted. Its function is as follows. Complexes with metalloproteinases (such as collagenases) and irreversibly inactivates them by binding to their catalytic zinc cofactor. The polypeptide is Metalloproteinase inhibitor 2 (TIMP2) (Gallus gallus (Chicken)).